A 423-amino-acid chain; its full sequence is CinA-like protein (423 aa).

The protein belongs to the CinA family.

The protein is CinA-like protein of Synechococcus sp. (strain CC9311).